The following is a 243-amino-acid chain: DNA repair protein RecO (243 aa).

This sequence belongs to the RecO family.

Involved in DNA repair and RecF pathway recombination. This Geobacter sulfurreducens (strain ATCC 51573 / DSM 12127 / PCA) protein is DNA repair protein RecO.